Reading from the N-terminus, the 124-residue chain is UPF0299 membrane protein VP1300 (124 aa).

4 consecutive transmembrane segments (helical) span residues 9–29 (LIQL…GITI), 35–55 (VSVP…TLGL), 72–92 (MILL…MLLA), and 95–115 (LPII…LAWL).

The protein belongs to the UPF0299 family.

It localises to the cell inner membrane. This chain is UPF0299 membrane protein VP1300, found in Vibrio parahaemolyticus serotype O3:K6 (strain RIMD 2210633).